Reading from the N-terminus, the 184-residue chain is MGEVKETKTNNSKENPEEEVPGVITTTTSAIHNFLKKTKAQDIINWGRKNSLWFMTQPMGCCGVEMIATGCAHYDTDRFGIIPRNSPRHADVMIISGYVTKKYLPALKRLWDQMPAPKWVIAMGDCAISGGPFYESYSTVQNIDEIFPIDVYIPGCPPRPEALIQGFVELQEKIKARKDRGTEY.

Residues 1 to 20 form a disordered region; the sequence is MGEVKETKTNNSKENPEEEV. [4Fe-4S] cluster is bound by residues Cys-61, Cys-62, Cys-126, and Cys-156.

This sequence belongs to the complex I 20 kDa subunit family. In terms of assembly, the FPO complex is composed of at least 13 different subunits. FAD is required as a cofactor. The cofactor is [4Fe-4S] cluster.

It localises to the cell inner membrane. It catalyses the reaction methanophenazine + reduced coenzyme F420-(gamma-L-Glu)(n) = dihydromethanophenazine + oxidized coenzyme F420-(gamma-L-Glu)(n) + H(+). Component of the F(420)H(2) dehydrogenase (FPO complex) which is part of the energy-conserving F(420)H(2):heterodisulfide oxidoreductase system. The membrane-bound electron transfer system of the complex plays an important role in the metabolism of methylotrophic methanogens when the organisms grow on methanol or methylamines. Catalyzes the oxidation of methanophenazine to dihydromethanophenazine. It shuttles electrons from F(420)H(2), via FAD and iron-sulfur (Fe-S) centers, to methanophenazine (an electron carrier in the membrane). It couples the redox reaction to proton translocation (for every two electrons transferred, two hydrogen ions are translocated across the cytoplasmic membrane), and thus conserves the redox energy in a proton gradient. It also catalyzes the oxidation of F(420)H(2) with quinones such as 2,3-dimethyl-1,4-naphthoquinone, 2-methyl-1,4-naphthoquinone and tetramethyl-p-benzoquinone. This chain is F(420)H(2) dehydrogenase subunit B (fpoB), found in Methanosarcina mazei (strain ATCC BAA-159 / DSM 3647 / Goe1 / Go1 / JCM 11833 / OCM 88) (Methanosarcina frisia).